The following is a 645-amino-acid chain: Chaperone protein DnaK (645 aa).

Thr-199 is modified (phosphothreonine; by autocatalysis). Disordered regions lie at residues 509 to 530 (GALS…AEED) and 615 to 645 (EAGA…EVKE). A compositionally biased stretch (basic and acidic residues) spans 518–530 (QMQKDAEANAEED). Residues 615 to 626 (EAGADAAGAAGA) show a composition bias toward low complexity. A compositionally biased stretch (acidic residues) spans 631-645 (GDDDDAIDAEFEVKE).

Belongs to the heat shock protein 70 family.

In terms of biological role, acts as a chaperone. In Rhodopirellula baltica (strain DSM 10527 / NCIMB 13988 / SH1), this protein is Chaperone protein DnaK.